The following is a 161-amino-acid chain: MSTTKAVIPGSFDPITYGHIDIIDRSADRFDELHICVLKNSGKSGTFSIEERIALIEESVKHLNNVTVHHFNGLLVDFCDKIGAETIIRGLRAVSDFEYELRLTSMNKKLNSNVETMYMMTSTNYSFISSSVVKEVAAYKANVSDFVPVHVEKALNEKFKK.

A substrate-binding site is contributed by S11. ATP is bound by residues S11–F12 and H19. The substrate site is built by K43, L75, and R89. ATP-binding positions include G90–R92, E100, and Y125–S131.

It belongs to the bacterial CoaD family. In terms of assembly, homohexamer. Mg(2+) is required as a cofactor.

The protein localises to the cytoplasm. It carries out the reaction (R)-4'-phosphopantetheine + ATP + H(+) = 3'-dephospho-CoA + diphosphate. It functions in the pathway cofactor biosynthesis; coenzyme A biosynthesis; CoA from (R)-pantothenate: step 4/5. Reversibly transfers an adenylyl group from ATP to 4'-phosphopantetheine, yielding dephospho-CoA (dPCoA) and pyrophosphate. The polypeptide is Phosphopantetheine adenylyltransferase (Staphylococcus saprophyticus subsp. saprophyticus (strain ATCC 15305 / DSM 20229 / NCIMB 8711 / NCTC 7292 / S-41)).